Reading from the N-terminus, the 441-residue chain is GTPase Der (441 aa).

EngA-type G domains are found at residues 4 to 168 (PVVA…PEDI) and 177 to 352 (IRIA…EQNS). GTP is bound by residues 10-17 (GRPNVGKS), 57-61 (DTGGI), 121-124 (NKVE), 183-190 (GRPNVGKS), 230-234 (DTAGM), and 295-298 (NKWD). A KH-like domain is found at 353–437 (TRVATATLNT…PIRMIVRQKD (85 aa)).

It belongs to the TRAFAC class TrmE-Era-EngA-EngB-Septin-like GTPase superfamily. EngA (Der) GTPase family. Associates with the 50S ribosomal subunit.

GTPase that plays an essential role in the late steps of ribosome biogenesis. This chain is GTPase Der, found in Desulfitobacterium hafniense (strain DSM 10664 / DCB-2).